We begin with the raw amino-acid sequence, 279 residues long: Movement protein (279 aa).

A disordered region spans residues 255–279; that stretch reads SPPFAIGSPSASRNNSFRSQVVNGL. Positions 263-279 are enriched in polar residues; it reads PSASRNNSFRSQVVNGL.

It belongs to the cucumovirus movement protein family.

Its subcellular location is the host cell junction. It is found in the host plasmodesma. In terms of biological role, transports viral genome to neighboring plant cells directly through plasmosdesmata, without any budding. The movement protein allows efficient cell to cell propagation, by bypassing the host cell wall barrier. Acts by forming a tubular structure at the host plasmodesmata, enlarging it enough to allow free passage of virion capsids. The chain is Movement protein from Cucumis sativus (Cucumber).